The following is a 117-amino-acid chain: Translation initiation factor 1A (117 aa).

One can recognise an S1-like domain in the interval 17–92; sequence IRVPLPDRSK…ERGDIVYRYT (76 aa).

This sequence belongs to the eIF-1A family.

Its function is as follows. Seems to be required for maximal rate of protein biosynthesis. Enhances ribosome dissociation into subunits and stabilizes the binding of the initiator Met-tRNA(I) to 40 S ribosomal subunits. This chain is Translation initiation factor 1A, found in Thermococcus kodakarensis (strain ATCC BAA-918 / JCM 12380 / KOD1) (Pyrococcus kodakaraensis (strain KOD1)).